We begin with the raw amino-acid sequence, 156 residues long: Small ribosomal subunit protein uS7 (156 aa).

Belongs to the universal ribosomal protein uS7 family. As to quaternary structure, part of the 30S ribosomal subunit. Contacts proteins S9 and S11.

One of the primary rRNA binding proteins, it binds directly to 16S rRNA where it nucleates assembly of the head domain of the 30S subunit. Is located at the subunit interface close to the decoding center, probably blocks exit of the E-site tRNA. The protein is Small ribosomal subunit protein uS7 of Synechococcus sp. (strain JA-2-3B'a(2-13)) (Cyanobacteria bacterium Yellowstone B-Prime).